The chain runs to 328 residues: GTPase Obg (328 aa).

The Obg domain maps to 2 to 160 (YNFKDSVNIT…LSVRLELFLV (159 aa)). One can recognise an OBG-type G domain in the interval 161 to 326 (ADIGLVGLPN…LIKEFFILAK (166 aa)). GTP contacts are provided by residues 167 to 174 (GLPNAGKS), 192 to 196 (FTTKI), 213 to 216 (DIPG), 280 to 283 (NKLD), and 307 to 309 (SIY). Positions 174 and 194 each coordinate Mg(2+).

This sequence belongs to the TRAFAC class OBG-HflX-like GTPase superfamily. OBG GTPase family. In terms of assembly, monomer. The cofactor is Mg(2+).

The protein localises to the cytoplasm. Its function is as follows. An essential GTPase which binds GTP, GDP and possibly (p)ppGpp with moderate affinity, with high nucleotide exchange rates and a fairly low GTP hydrolysis rate. Plays a role in control of the cell cycle, stress response, ribosome biogenesis and in those bacteria that undergo differentiation, in morphogenesis control. In Borreliella burgdorferi (strain ATCC 35210 / DSM 4680 / CIP 102532 / B31) (Borrelia burgdorferi), this protein is GTPase Obg.